Consider the following 484-residue polypeptide: UDP-N-acetylmuramate--L-alanine ligase (484 aa).

G126–T132 contributes to the ATP binding site.

This sequence belongs to the MurCDEF family.

The protein resides in the cytoplasm. It carries out the reaction UDP-N-acetyl-alpha-D-muramate + L-alanine + ATP = UDP-N-acetyl-alpha-D-muramoyl-L-alanine + ADP + phosphate + H(+). The protein operates within cell wall biogenesis; peptidoglycan biosynthesis. In terms of biological role, cell wall formation. In Tolumonas auensis (strain DSM 9187 / NBRC 110442 / TA 4), this protein is UDP-N-acetylmuramate--L-alanine ligase.